The chain runs to 32 residues: Dermaseptin-L1 (32 aa).

In terms of tissue distribution, expressed by the skin glands.

The protein resides in the secreted. Antimicrobial peptide active against the Gram-negative bacterium E.coli (MIC=8 uM) but inactive against the Gram-positive bacterium S.aureus. Also inhibits growth of zoospores of the chytrid fungus B.dendrobatidis at high concentrations (above 25 uM). Shows anticancer activities since it is cytolytic against HepG2 human hepatoma-derived cells (LC(50)=45 uM). Is only weakly hemolytic on human erythrocytes. The sequence is that of Dermaseptin-L1 from Agalychnis lemur (Lemur leaf frog).